A 118-amino-acid chain; its full sequence is MIEALLVATGGFFGAITRFAISNWFKKRNKTQFPLATFLINITGAFLLGYIIGNGVTTGWQLLLGTGFMGAFTTFSTFKLEAVQLLNRKNISTFLLYLSATYIIGILFAFLGMKLGGI.

Helical transmembrane passes span 1–21 (MIEA…RFAI), 33–53 (FPLA…YIIG), 55–75 (GVTT…FTTF), and 91–111 (ISTF…FAFL). Na(+) contacts are provided by Gly70 and Thr73.

The protein belongs to the fluoride channel Fluc/FEX (TC 1.A.43) family.

Its subcellular location is the cell membrane. It catalyses the reaction fluoride(in) = fluoride(out). With respect to regulation, na(+) is not transported, but it plays an essential structural role and its presence is essential for fluoride channel function. In terms of biological role, fluoride-specific ion channel. Important for reducing fluoride concentration in the cell, thus reducing its toxicity. The protein is Fluoride-specific ion channel FluC 2 of Bacillus cereus (strain ATCC 14579 / DSM 31 / CCUG 7414 / JCM 2152 / NBRC 15305 / NCIMB 9373 / NCTC 2599 / NRRL B-3711).